Reading from the N-terminus, the 419-residue chain is Farnesyl pyrophosphate synthase (419 aa).

Met1 is modified (N-acetylmethionine). Lys123, Arg126, and Gln162 together coordinate isopentenyl diphosphate. Lys123 carries the post-translational modification N6-(2-hydroxyisobutyryl)lysine; alternate. The residue at position 123 (Lys123) is an N6-acetyllysine; alternate. The Mg(2+) site is built by Asp169 and Asp173. Arg178 provides a ligand contact to dimethylallyl diphosphate. Residue Arg179 participates in isopentenyl diphosphate binding. Residues Lys266, Thr267, Gln306, Lys323, and Lys332 each contribute to the dimethylallyl diphosphate site. At Lys353 the chain carries N6-acetyllysine.

This sequence belongs to the FPP/GGPP synthase family. As to quaternary structure, homodimer. Interacts with RSAD2. (Microbial infection) Interacts with HTLV-1 protein p13(II). Mg(2+) serves as cofactor.

The protein localises to the cytoplasm. The enzyme catalyses isopentenyl diphosphate + dimethylallyl diphosphate = (2E)-geranyl diphosphate + diphosphate. It catalyses the reaction isopentenyl diphosphate + (2E)-geranyl diphosphate = (2E,6E)-farnesyl diphosphate + diphosphate. The protein operates within isoprenoid biosynthesis; farnesyl diphosphate biosynthesis; farnesyl diphosphate from geranyl diphosphate and isopentenyl diphosphate: step 1/1. It participates in isoprenoid biosynthesis; geranyl diphosphate biosynthesis; geranyl diphosphate from dimethylallyl diphosphate and isopentenyl diphosphate: step 1/1. Inactivated by interferon-induced RSAD2. This inactivation may result of disruption of lipid rafts at the plasma membrane, and thus have an antiviral effect since many enveloped viruses need lipid rafts to bud efficiently out of the cell. Its function is as follows. Key enzyme in isoprenoid biosynthesis which catalyzes the formation of farnesyl diphosphate (FPP), a precursor for several classes of essential metabolites including sterols, dolichols, carotenoids, and ubiquinones. FPP also serves as substrate for protein farnesylation and geranylgeranylation. Catalyzes the sequential condensation of isopentenyl pyrophosphate with the allylic pyrophosphates, dimethylallyl pyrophosphate, and then with the resultant geranylpyrophosphate to the ultimate product farnesyl pyrophosphate. The polypeptide is Farnesyl pyrophosphate synthase (Homo sapiens (Human)).